Reading from the N-terminus, the 788-residue chain is Ciliated left-right organizer metallopeptidase (788 aa).

The first 20 residues, 1-20, serve as a signal peptide directing secretion; it reads MLLLLLLLLLLPPLVLRVAA. Over 21–735 the chain is Extracellular; that stretch reads SRCLHDETQK…DHNPSMTHLR (715 aa). A compositionally biased stretch (low complexity) spans 40–56; it reads SQLPSKSRSSSLTLPSS. Positions 40–59 are disordered; the sequence is SQLPSKSRSSSLTLPSSRDP. His-305 is a Zn(2+) binding site. The active site involves Glu-306. His-309 provides a ligand contact to Zn(2+). A glycan (N-linked (GlcNAc...) asparagine) is linked at Asn-333. His-385 contacts Zn(2+). Asn-425, Asn-491, Asn-524, and Asn-713 each carry an N-linked (GlcNAc...) asparagine glycan. A helical membrane pass occupies residues 736–756; the sequence is LSMGLCLMLLILVGVMGTTAY. Residues 757–788 lie on the Cytoplasmic side of the membrane; it reads QKRATLPVRPSASYHSPELHSTRVPVRGIREV. Positions 767 to 788 are disordered; the sequence is SASYHSPELHSTRVPVRGIREV.

This sequence belongs to the peptidase M8 family. It depends on Zn(2+) as a cofactor.

The protein localises to the membrane. Putative metalloproteinase that plays a role in left-right patterning process. The chain is Ciliated left-right organizer metallopeptidase from Homo sapiens (Human).